Here is a 130-residue protein sequence, read N- to C-terminus: Small ribosomal subunit protein uS11 (130 aa).

Belongs to the universal ribosomal protein uS11 family. In terms of assembly, part of the 30S ribosomal subunit. Interacts with proteins S7 and S18. Binds to IF-3.

In terms of biological role, located on the platform of the 30S subunit, it bridges several disparate RNA helices of the 16S rRNA. Forms part of the Shine-Dalgarno cleft in the 70S ribosome. The sequence is that of Small ribosomal subunit protein uS11 from Latilactobacillus sakei subsp. sakei (strain 23K) (Lactobacillus sakei subsp. sakei).